Reading from the N-terminus, the 184-residue chain is Adenine phosphoribosyltransferase (184 aa).

Belongs to the purine/pyrimidine phosphoribosyltransferase family. As to quaternary structure, homodimer.

It localises to the cytoplasm. The catalysed reaction is AMP + diphosphate = 5-phospho-alpha-D-ribose 1-diphosphate + adenine. Its pathway is purine metabolism; AMP biosynthesis via salvage pathway; AMP from adenine: step 1/1. In terms of biological role, catalyzes a salvage reaction resulting in the formation of AMP, that is energically less costly than de novo synthesis. In Corynebacterium diphtheriae (strain ATCC 700971 / NCTC 13129 / Biotype gravis), this protein is Adenine phosphoribosyltransferase.